The chain runs to 250 residues: 1-(5-phosphoribosyl)-5-[(5-phosphoribosylamino)methylideneamino] imidazole-4-carboxamide isomerase (250 aa).

The active-site Proton acceptor is the Asp-12. Residue Asp-134 is the Proton donor of the active site.

The protein belongs to the HisA/HisF family.

The protein localises to the cytoplasm. The catalysed reaction is 1-(5-phospho-beta-D-ribosyl)-5-[(5-phospho-beta-D-ribosylamino)methylideneamino]imidazole-4-carboxamide = 5-[(5-phospho-1-deoxy-D-ribulos-1-ylimino)methylamino]-1-(5-phospho-beta-D-ribosyl)imidazole-4-carboxamide. The protein operates within amino-acid biosynthesis; L-histidine biosynthesis; L-histidine from 5-phospho-alpha-D-ribose 1-diphosphate: step 4/9. The chain is 1-(5-phosphoribosyl)-5-[(5-phosphoribosylamino)methylideneamino] imidazole-4-carboxamide isomerase from Actinobacillus pleuropneumoniae serotype 3 (strain JL03).